Consider the following 219-residue polypeptide: Guanylate kinase (219 aa).

In terms of domain architecture, Guanylate kinase-like spans 15 to 194; the sequence is GLMFVLSSPS…AFAEVQSILK (180 aa). Residue 22–29 coordinates ATP; it reads SPSGAGKT.

The protein belongs to the guanylate kinase family.

The protein resides in the cytoplasm. It carries out the reaction GMP + ATP = GDP + ADP. In terms of biological role, essential for recycling GMP and indirectly, cGMP. The polypeptide is Guanylate kinase (Bradyrhizobium diazoefficiens (strain JCM 10833 / BCRC 13528 / IAM 13628 / NBRC 14792 / USDA 110)).